Here is a 3961-residue protein sequence, read N- to C-terminus: Hybrid PKS-NRPS synthetase phm1 (3961 aa).

One can recognise a Ketosynthase family 3 (KS3) domain in the interval 4 to 436; it reads SEPIAIIGSA…GTNAHAIVEA (433 aa). Catalysis depends on for beta-ketoacyl synthase activity residues Cys-178, His-317, and His-356. The tract at residues 541-867 is malonyl-CoA:ACP transacylase (MAT) domain; the sequence is VFTGQGAQWP…RSKNDILELS (327 aa). An N-terminal hotdog fold region spans residues 933–1068; that stretch reads HPILGKRCLE…GTVTVTLAEP (136 aa). The tract at residues 933–1234 is dehydratase (DH) domain; the sequence is HPILGKRCLE…LELVPFTAAR (302 aa). One can recognise a PKS/mFAS DH domain in the interval 933–1236; that stretch reads HPILGKRCLE…LVPFTAARPE (304 aa). Residue His-966 is the Proton acceptor; for dehydratase activity of the active site. The segment at 1083–1236 is C-terminal hotdog fold; it reads MTEIEVDRFY…LVPFTAARPE (154 aa). The Proton donor; for dehydratase activity role is filled by Asp-1143. A methyltransferase (MT) domain region spans residues 1376–1569; the sequence is FDFYDQGLGL…GFGGIDTSTP (194 aa). The tract at residues 2106-2277 is ketoreductase (KR) domain; it reads TYLLIGMSGQ…GVPGSAISIS (172 aa). The region spanning 2386 to 2464 is the Carrier 1 domain; it reads QAATIIKDGF…ELLQEAMDRT (79 aa). Ser-2424 bears the O-(pantetheine 4'-phosphoryl)serine mark. The interval 2482–2527 is disordered; sequence PVTNTATPPPEVQVTGSASDSSRSLTPDGLSTSRPSTPVRTPMTEI. Polar residues predominate over residues 2495–2520; sequence VTGSASDSSRSLTPDGLSTSRPSTPV. The interval 2553-2993 is condensation (C) domain; sequence PMSYGQARFW…DLPRWAGADV (441 aa). The adenylation (A) (KR) domain stretch occupies residues 3019-3424; the sequence is QMIGTYASKP…DGALFVHGRI (406 aa). Residues 3542–3616 form the Carrier 2 domain; sequence ANMEGRVAAL…GMARHVRAAF (75 aa). Ser-3576 bears the O-(pantetheine 4'-phosphoryl)serine mark. Residues 3725 to 3871 are reductase (RED) domain; it reads ITDIVFHCAA…VRPVSDVATT (147 aa).

In the C-terminal section; belongs to the NRP synthetase family.

It functions in the pathway secondary metabolite biosynthesis. Hybrid PKS-NRPS synthetase; part of the gene cluster that mediates the biosynthesis of the trans-fused decalin-containing tetramic acid phomasetin, the stereochemical opposite of the HIV-1 integrase inhibitor equisetin. The PKS module of phm1 together with the enoylreductase phm4 catalyze the formation of the polyketide unit which is then conjugated to L-serine by the condensation domain of the phm1 NRPS module. Activity of the Dieckmann cyclase domain (RED) of phm1 results in release of the Dieckmann product intermediate. The Diels-Alderase phm7 then uses the Dieckmann product of phm1 as substrate and catalyzes the Diels-Alder cycloaddition to form the decalin ring of N-desmethylphomasetin. N-desmethylphomasetin is further methylated to phomasetin by the methyltransferase phm5. The chain is Hybrid PKS-NRPS synthetase phm1 from Pyrenochaetopsis sp.